Reading from the N-terminus, the 181-residue chain is ATP synthase subunit b 2 (181 aa).

Residues 1 to 18 are compositionally biased toward low complexity; it reads MATTTHDAGHGAAEAAHG. Residues 1–20 are disordered; that stretch reads MATTTHDAGHGAAEAAHGSS. Residues 34 to 54 traverse the membrane as a helical segment; the sequence is IFWLLVTLVVIYLILSRIALP.

Belongs to the ATPase B chain family. As to quaternary structure, F-type ATPases have 2 components, F(1) - the catalytic core - and F(0) - the membrane proton channel. F(1) has five subunits: alpha(3), beta(3), gamma(1), delta(1), epsilon(1). F(0) has three main subunits: a(1), b(2) and c(10-14). The alpha and beta chains form an alternating ring which encloses part of the gamma chain. F(1) is attached to F(0) by a central stalk formed by the gamma and epsilon chains, while a peripheral stalk is formed by the delta and b chains.

Its subcellular location is the cell inner membrane. Functionally, f(1)F(0) ATP synthase produces ATP from ADP in the presence of a proton or sodium gradient. F-type ATPases consist of two structural domains, F(1) containing the extramembraneous catalytic core and F(0) containing the membrane proton channel, linked together by a central stalk and a peripheral stalk. During catalysis, ATP synthesis in the catalytic domain of F(1) is coupled via a rotary mechanism of the central stalk subunits to proton translocation. In terms of biological role, component of the F(0) channel, it forms part of the peripheral stalk, linking F(1) to F(0). The b'-subunit is a diverged and duplicated form of b found in plants and photosynthetic bacteria. In Ruegeria sp. (strain TM1040) (Silicibacter sp.), this protein is ATP synthase subunit b 2 (atpF2).